The primary structure comprises 797 residues: Discoidin domain-containing receptor tyrosine kinase B (797 aa).

A signal peptide spans 1–19; that stretch reads MKLLLYLFGVTFHSNTVVA. Over 20–384 the chain is Extracellular; sequence LELRECSHQL…VTEHDDGTSM (365 aa). The F5/8 type C domain occupies 25-181; sequence CSHQLGMSNR…VCMRVEVFGC (157 aa). Cysteines 25 and 181 form a disulfide. The tract at residues 46–66 is disordered; that stretch reads SFDLQSTGPQHARAHQESGSG. 4 N-linked (GlcNAc...) asparagine glycosylation sites follow: Asn-141, Asn-167, Asn-264, and Asn-353. Residues 385–405 form a helical membrane-spanning segment; it reads FAFIIFFFMFLIVAVIILTVL. The Cytoplasmic segment spans residues 406 to 797; it reads YRKREYRVKA…LVHTSPHIHF (392 aa). The Protein kinase domain maps to 527-785; that stretch reads LICVSRIGQG…PSFENVHLHL (259 aa). ATP contacts are provided by residues 533–541 and Lys-554; that span reads IGQGEFGEV. Residue Asp-645 is the Proton acceptor of the active site.

The protein belongs to the protein kinase superfamily. Tyr protein kinase family. Insulin receptor subfamily. Interacts with shc-1. Autophosphorylated on tyrosine residues. In terms of processing, N-glycosylation at Asn-141 is required for axon regeneration after injury but is dispensable for kinase activity and axon localization. In terms of tissue distribution, expressed in some neurons in head and tail, some motoneurons in ventral nerve cord, in PVP interneurons, seam cells, rectal gland cells, vulva cells and some non-neuronal cells in the tail. Expressed in D-type motor neurons.

Its subcellular location is the cell membrane. It localises to the cell projection. The protein resides in the axon. It is found in the perikaryon. It carries out the reaction L-tyrosyl-[protein] + ATP = O-phospho-L-tyrosyl-[protein] + ADP + H(+). In terms of biological role, tyrosine-protein kinase receptor which, together with ddr-1, is involved in axon guidance to establish the tracts for the ventral and dorsal nerve cords during nervous system development. Acts upstream of the adapter shc-1, and the tyrosine kinase receptors svh-1 and svh-2 to regulate axon regeneration following injury in D-type motor neurons. May mediate axon regeneration in association with the collagen emb-9. The protein is Discoidin domain-containing receptor tyrosine kinase B of Caenorhabditis elegans.